The primary structure comprises 149 residues: Nucleoside diphosphate kinase (149 aa).

Residues lysine 9, phenylalanine 57, arginine 85, threonine 91, arginine 102, and asparagine 112 each coordinate ATP. The active-site Pros-phosphohistidine intermediate is histidine 115.

The protein belongs to the NDK family. In terms of assembly, homotetramer. Mg(2+) serves as cofactor.

It localises to the cytoplasm. The enzyme catalyses a 2'-deoxyribonucleoside 5'-diphosphate + ATP = a 2'-deoxyribonucleoside 5'-triphosphate + ADP. The catalysed reaction is a ribonucleoside 5'-diphosphate + ATP = a ribonucleoside 5'-triphosphate + ADP. Functionally, major role in the synthesis of nucleoside triphosphates other than ATP. The ATP gamma phosphate is transferred to the NDP beta phosphate via a ping-pong mechanism, using a phosphorylated active-site intermediate. In Pelotomaculum thermopropionicum (strain DSM 13744 / JCM 10971 / SI), this protein is Nucleoside diphosphate kinase.